The primary structure comprises 598 residues: MFS transporter L2 (598 aa).

Transmembrane regions (helical) follow at residues 83 to 103 (IAAF…ATSI), 122 to 142 (FWAG…LGSF), and 150 to 170 (SLIY…AVAN). N171 is a glycosylation site (N-linked (GlcNAc...) asparagine). The next 5 membrane-spanning stretches (helical) occupy residues 183–203 (GVGG…TVPL), 212–232 (FFGM…GAFA), 239–259 (WVFW…TVFL), 277–297 (WIGM…ITWG), and 309–329 (LVPL…QEKF). N-linked (GlcNAc...) asparagine glycosylation is present at N342. The next 6 helical transmembrane spans lie at 346–366 (ALLY…LYFM), 383–403 (VALF…GIAI), 411–431 (WANW…ILLK), 439–459 (WIFL…AMAL), 476–496 (MFSF…GVVF), and 550–570 (YIWI…LFID).

The protein belongs to the major facilitator superfamily.

The protein localises to the membrane. MFS transporter; part of the gene cluster that mediates the biosynthesis of squalestatin S1 (SQS1, also known as zaragozic acid A), a lead compound for the treatment of hyper-cholesterolemia by targeting squalene synthase (SS). The polypeptide is MFS transporter L2 (Phoma sp. (strain ATCC 20986 / MF5453)).